The primary structure comprises 382 residues: Galactokinase (382 aa).

34–37 contributes to the substrate binding site; that stretch reads EHTD. 124 to 130 provides a ligand contact to ATP; that stretch reads GAGLSSS. Mg(2+) is bound by residues S130 and E162. D174 functions as the Proton acceptor in the catalytic mechanism. Substrate is bound at residue Y223.

This sequence belongs to the GHMP kinase family. GalK subfamily.

Its subcellular location is the cytoplasm. It carries out the reaction alpha-D-galactose + ATP = alpha-D-galactose 1-phosphate + ADP + H(+). It participates in carbohydrate metabolism; galactose metabolism. Its function is as follows. Catalyzes the transfer of the gamma-phosphate of ATP to D-galactose to form alpha-D-galactose-1-phosphate (Gal-1-P). In Escherichia coli O157:H7 (strain EC4115 / EHEC), this protein is Galactokinase.